Reading from the N-terminus, the 901-residue chain is HTH-type transcriptional regulator MalT (901 aa).

Position 39–46 (39–46 (SPAGYGKT)) interacts with ATP. One can recognise an HTH luxR-type domain in the interval 829-894 (ELIRTSPLTQ…DAVQHAQQLL (66 aa)). The segment at residues 853–872 (NEQIAGELDVAATTIKTHIR) is a DNA-binding region (H-T-H motif).

It belongs to the MalT family. Monomer in solution. Oligomerizes to an active state in the presence of the positive effectors ATP and maltotriose.

With respect to regulation, activated by ATP and maltotriose, which are both required for DNA binding. Functionally, positively regulates the transcription of the maltose regulon whose gene products are responsible for uptake and catabolism of malto-oligosaccharides. Specifically binds to the promoter region of its target genes, recognizing a short DNA motif called the MalT box. In Klebsiella pneumoniae (strain 342), this protein is HTH-type transcriptional regulator MalT.